The primary structure comprises 485 residues: L-ornithine N(5)-oxygenase (485 aa).

FAD is bound by residues 49–57 and Gln-68; that span reads ERQQQFVWH. Lys-73 serves as a coordination point for L-ornithine. Val-134 contributes to the FAD binding site. Residue Arg-243 coordinates NADP(+). L-ornithine-binding positions include 257 to 260 and Asn-287; that span reads NEIF. 287–289 lines the NADP(+) pocket; it reads NYS. 425–427 serves as a coordination point for FAD; it reads TLL. Ser-428 provides a ligand contact to L-ornithine.

This sequence belongs to the lysine N(6)-hydroxylase/L-ornithine N(5)-oxygenase family. In terms of assembly, homotetramer. It depends on FAD as a cofactor.

The catalysed reaction is L-ornithine + NADH + O2 = N(5)-hydroxy-L-ornithine + NAD(+) + H2O. It catalyses the reaction L-ornithine + NADPH + O2 = N(5)-hydroxy-L-ornithine + NADP(+) + H2O. It participates in siderophore biosynthesis. Functionally, L-ornithine N(5)-oxygenase; part of the gene cluster that mediates the biosynthesis of desferriferrichrome that chelates Fe(3+) to form ferrichrome. Fe(3+) is a key factor for induction of trap formation and the fungus uses the iron chelating desferriferrichrome to sequester Fe(3+) to inhibit trap formation and increase nematicidal activity. The biosynthesis of desferriferrichrome requires the action of the L-ornithine N(5)-oxygenase (LOO) Ao414 that hydroxylates L-ornithine at N(5), resulting in the formation of N(5)-hydroxyl-L-ornithine, which is subsequently N-acetylated to yield N(5)-acetyl-N(5)-hydroxy-L-ornithine (L-AHO). L-AHO harbors one hydroxamate moiety, which is the key core responsible for chelating iron. Then, L-AHO is further condensated with glycines to form desferriferrichrome through the NRPS protein Ao415. In Arthrobotrys oligospora (strain ATCC 24927 / CBS 115.81 / DSM 1491) (Nematode-trapping fungus), this protein is L-ornithine N(5)-oxygenase.